Consider the following 160-residue polypeptide: Transcription elongation factor GreB (160 aa).

The protein belongs to the GreA/GreB family. GreB subfamily.

In terms of biological role, necessary for efficient RNA polymerase transcription elongation past template-encoded arresting sites. The arresting sites in DNA have the property of trapping a certain fraction of elongating RNA polymerases that pass through, resulting in locked ternary complexes. Cleavage of the nascent transcript by cleavage factors such as GreA or GreB allows the resumption of elongation from the new 3'terminus. GreB releases sequences of up to 9 nucleotides in length. This is Transcription elongation factor GreB from Vibrio vulnificus (strain CMCP6).